The chain runs to 167 residues: Zinc finger CCCH domain-containing protein 3 (167 aa).

The segment at 63–91 (AAAIGVCQHFVRTGTCKFGDSCRYFHPKP) adopts a C3H1-type zinc-finger fold. Residues 89-101 (PKPPPANPGPAPS) are compositionally biased toward pro residues. The tract at residues 89 to 167 (PKPPPANPGP…YPPFPFVDWG (79 aa)) is disordered. Polar residues predominate over residues 108–120 (MAQQSNIQGSQPN). A compositionally biased stretch (pro residues) spans 149–167 (SLRPPPEGGYPPFPFVDWG).

This chain is Zinc finger CCCH domain-containing protein 3, found in Oryza sativa subsp. japonica (Rice).